The sequence spans 784 residues: Cadherin-5 (784 aa).

The first 24 residues, 1-24 (MQRLTELATALGAFLGLLAVAAMA), serve as a signal peptide directing secretion. A propeptide spanning residues 25–45 (GPNFPQIDTPNMLPAHHRQKR) is cleaved from the precursor. 5 Cadherin domains span residues 46-149 (DWIW…WPVF), 150-256 (SHQV…FPVF), 257-371 (TQST…PPVF), 372-476 (QRHF…DNPP), and 477-593 (EFAQ…MAAQ). Topologically, residues 46–599 (DWIWNQMHID…MAAQAGVSIQ (554 aa)) are extracellular. The Ca(2+) site is built by Glu-56 and Glu-57. The N-linked (GlcNAc...) asparagine glycan is linked to Asn-59. Asp-107, Glu-109, Asp-141, Ile-142, Asn-143, Asp-144, and Asn-145 together coordinate Ca(2+). Residue Asn-155 is glycosylated (N-linked (GlcNAc...) asparagine). Ca(2+) contacts are provided by Asp-175, Asp-177, His-184, and Asp-229. N-linked (GlcNAc...) asparagine glycosylation is found at Asn-441, Asn-523, and Asn-535. A helical membrane pass occupies residues 600–620 (ALVAIFLCILTITVITLLIIL). The required for interaction with PALS1 stretch occupies residues 621 to 660 (RRRIRKQAHAHSKSALEIHEQLVTYDEEGGGEMDTTSYDV). Residues 621 to 784 (RRRIRKQAHA…GSDPQEELII (164 aa)) lie on the Cytoplasmic side of the membrane.

In terms of assembly, part of a complex composed of AMOTL2, MAGI1 and CDH5, within the complex AMOTL2 acts as a scaffold protein for the interaction of MAGI1 with CDH5. The complex is required for coupling actin fibers to cell junctions in endothelial cells. Within the complex AMOTL2 (via its N-terminus) interacts with CDH5. Interacts (via cadherin 5 domain) with PTPRB. Interacts with TRPC4. Interacts with KRIT1. Interacts with PARD3. Interacts with RTN4 (isoform B). Interacts with PALS1; the interaction promotes PALS1 localization to cell junctions and is required for CDH5-mediated vascular lumen formation and endothelial cell polarity. Interacts with CTNND1/p120-catenin; the interaction controls CADH5 endocytosis. In terms of processing, phosphorylated on tyrosine residues by KDR/VEGFR-2. Dephosphorylated by PTPRB. Post-translationally, O-glycosylated. In terms of tissue distribution, expressed in postnatal endothelial cells of the retinal vascular plexus (at protein level).

It is found in the cell junction. Its subcellular location is the adherens junction. The protein localises to the cell membrane. It localises to the cytoplasm. In terms of biological role, cadherins are calcium-dependent cell adhesion proteins. They preferentially interact with themselves in a homophilic manner in connecting cells; cadherins may thus contribute to the sorting of heterogeneous cell types. This cadherin may play an important role in endothelial cell biology through control of the cohesion and organization of the intercellular junctions. It associates with alpha-catenin forming a link to the cytoskeleton. Plays a role in coupling actin fibers to cell junctions in endothelial cells, via acting as a cell junctional complex anchor for AMOTL2 and MAGI1. Acts in concert with KRIT1 and PALS1 to establish and maintain correct endothelial cell polarity and vascular lumen. These effects are mediated by recruitment and activation of the Par polarity complex and RAP1B. Required for activation of PRKCZ and for localization of phosphorylated PRKCZ, PARD3, TIAM1 and RAP1B to the cell junction. Associates with CTNND1/p120-catenin to control CADH5 endocytosis. The sequence is that of Cadherin-5 from Mus musculus (Mouse).